The sequence spans 29 residues: Brevinin-2Td (29 aa).

Cys-23 and Cys-29 are oxidised to a cystine.

It belongs to the frog skin active peptide (FSAP) family. Brevinin subfamily. Expressed by the skin glands.

The protein localises to the secreted. In terms of biological role, antibacterial activity against representative Gram-negative and Gram-positive bacteria. This Rana temporaria (European common frog) protein is Brevinin-2Td.